A 370-amino-acid polypeptide reads, in one-letter code: Histidinol-phosphate aminotransferase 3 (370 aa).

Lys229 is subject to N6-(pyridoxal phosphate)lysine.

It belongs to the class-II pyridoxal-phosphate-dependent aminotransferase family. Histidinol-phosphate aminotransferase subfamily. As to quaternary structure, homodimer. Pyridoxal 5'-phosphate serves as cofactor.

The enzyme catalyses L-histidinol phosphate + 2-oxoglutarate = 3-(imidazol-4-yl)-2-oxopropyl phosphate + L-glutamate. It functions in the pathway amino-acid biosynthesis; L-histidine biosynthesis; L-histidine from 5-phospho-alpha-D-ribose 1-diphosphate: step 7/9. The chain is Histidinol-phosphate aminotransferase 3 (hisC3) from Rhizobium meliloti (strain 1021) (Ensifer meliloti).